We begin with the raw amino-acid sequence, 190 residues long: MSNQDEPQNSPEEFAEDQQADVALEEASSDSSETAADVDLVARIEALEAELTEAKEQALRAAAEMHNVRRRAEQDVEKAHKFGLEKFVSDMLPVADNLGRALEAAAAEGADMTAVTEGVDLTLKSLMDSLKKHGVESVNPEGEPFNPELHQAMTAVENPDAEPNTVINVYQVGYTLHGRLVRPAMVVVSK.

The segment covering 1–11 has biased composition (polar residues); the sequence is MSNQDEPQNSP. The disordered stretch occupies residues 1–36; it reads MSNQDEPQNSPEEFAEDQQADVALEEASSDSSETAA. Positions 13–28 are enriched in acidic residues; it reads EFAEDQQADVALEEAS.

The protein belongs to the GrpE family. As to quaternary structure, homodimer.

It localises to the cytoplasm. In terms of biological role, participates actively in the response to hyperosmotic and heat shock by preventing the aggregation of stress-denatured proteins, in association with DnaK and GrpE. It is the nucleotide exchange factor for DnaK and may function as a thermosensor. Unfolded proteins bind initially to DnaJ; upon interaction with the DnaJ-bound protein, DnaK hydrolyzes its bound ATP, resulting in the formation of a stable complex. GrpE releases ADP from DnaK; ATP binding to DnaK triggers the release of the substrate protein, thus completing the reaction cycle. Several rounds of ATP-dependent interactions between DnaJ, DnaK and GrpE are required for fully efficient folding. This chain is Protein GrpE, found in Teredinibacter turnerae (strain ATCC 39867 / T7901).